The sequence spans 435 residues: Transcription activator ACTTR (435 aa).

A DNA-binding region (zn(2)-C6 fungal-type) is located at residues 16–43 (CDFCTQSKLRCNKNKPSCRRCTIQQQPC). The segment at 48–89 (ARRTGRPPKRPRKANDGQEANEQHGDQDPVTSTPGGSCQQQS) is disordered. Over residues 50–59 (RTGRPPKRPR) the composition is skewed to basic residues. Basic and acidic residues predominate over residues 60–74 (KANDGQEANEQHGDQ). Positions 76–89 (PVTSTPGGSCQQQS) are enriched in polar residues.

The protein localises to the nucleus. In terms of biological role, transcription factor that regulates the expression of the gene clusters that mediate the biosynthesis of the host-selective toxins (HSTs) ACT-toxins responsible for brown spot of tangerine disease by the tangerine pathotype which affects tangerines and mandarins. ACT-toxins consist of three moieties, 9,10-epoxy-8-hydroxy-9-methyl-decatrienoic acid (EDA), valine and a polyketide. ACT-toxin I is toxic to both citrus and pear; toxin II the 5''-deoxy derivative of ACT-toxin I, is highly toxic to pear and slightly toxic to citrus. On cellular level, ACT-toxins affect plasma membrane of susceptible cells and cause a sudden increase in loss of K(+) after a few minutes of toxin treatment. This chain is Transcription activator ACTTR, found in Alternaria alternata (Alternaria rot fungus).